The chain runs to 139 residues: D-ribose pyranase (139 aa).

Residue H20 is the Proton donor of the active site. Substrate-binding positions include D28, H106, and 128 to 130 (YAN).

Belongs to the RbsD / FucU family. RbsD subfamily. As to quaternary structure, homodecamer.

Its subcellular location is the cytoplasm. It catalyses the reaction beta-D-ribopyranose = beta-D-ribofuranose. It participates in carbohydrate metabolism; D-ribose degradation; D-ribose 5-phosphate from beta-D-ribopyranose: step 1/2. Catalyzes the interconversion of beta-pyran and beta-furan forms of D-ribose. The protein is D-ribose pyranase of Maridesulfovibrio salexigens (strain ATCC 14822 / DSM 2638 / NCIMB 8403 / VKM B-1763) (Desulfovibrio salexigens).